The primary structure comprises 556 residues: Phospholipase D (556 aa).

A signal peptide spans Met1–Ala47. The 28-residue stretch at Ser210–Asp237 folds into the PLD phosphodiesterase 1 domain. The disordered stretch occupies residues Ser326–Thr360. One can recognise a PLD phosphodiesterase 2 domain in the interval Lys484 to Trp511.

Belongs to the phospholipase D family. Post-translationally, probably has at least 1 disulfide bond.

The protein resides in the secreted. The enzyme catalyses a 1,2-diacyl-sn-glycero-3-phosphocholine + H2O = a 1,2-diacyl-sn-glycero-3-phosphate + choline + H(+). Its activity is regulated as follows. Inhibited by mercaptoethanol and dithiothreitol. In terms of biological role, a reversible phospholipase active on phosphatidylcholine (PC) and phosphatidylethanolamine. Lysophosphatidylcholine and egg sphingomyelin are hydrolyzed about 50 times and 100 times more slowly than PC, respectively. During the transphosphatidylation reaction straight-chain hydroxy compounds, such as triethyleneglycol and triethyleneglycol monomethyl ether, were phosphatidylated in good yield, as were monosaccharides. Disaccharides and sugar alcohol reacted slowly, while N-acetyl-D-galactosamine, D-galactosamine and D-galacturonic acid were not phosphatidylated. The protein is Phospholipase D of Streptomyces antibioticus.